A 544-amino-acid chain; its full sequence is Membrane protein insertase YidC (544 aa).

The chain crosses the membrane as a helical span at residues 6–26; it reads NLLLIALLFVTFMLWQAWETD. The interval 112–132 is disordered; that stretch reads SGLTGKNGPDNPANGPRPLFT. Transmembrane regions (helical) follow at residues 343–363, 418–438, 456–476, and 497–517; these read KFLHGFIGNWGFSIIAITFIV, LGGCFPLLIQMPIFLALYYML, LSAQDPYYILPILMGVTMFFI, and PVIFTVFFLWFPSGLVMYYIV.

This sequence belongs to the OXA1/ALB3/YidC family. Type 1 subfamily. In terms of assembly, interacts with the Sec translocase complex via SecD. Specifically interacts with transmembrane segments of nascent integral membrane proteins during membrane integration.

The protein resides in the cell inner membrane. Functionally, required for the insertion and/or proper folding and/or complex formation of integral membrane proteins into the membrane. Involved in integration of membrane proteins that insert both dependently and independently of the Sec translocase complex, as well as at least some lipoproteins. Aids folding of multispanning membrane proteins. The polypeptide is Membrane protein insertase YidC (Pectobacterium carotovorum subsp. carotovorum (strain PC1)).